Reading from the N-terminus, the 208-residue chain is Large ribosomal subunit protein uL4 (208 aa).

A disordered region spans residues 47-84 (ARAARERSDVARTGKKFGRQKGGGTARHGDRRAPVFIG). Residues 49 to 58 (AARERSDVAR) are compositionally biased toward basic and acidic residues.

The protein belongs to the universal ribosomal protein uL4 family. As to quaternary structure, part of the 50S ribosomal subunit.

Functionally, one of the primary rRNA binding proteins, this protein initially binds near the 5'-end of the 23S rRNA. It is important during the early stages of 50S assembly. It makes multiple contacts with different domains of the 23S rRNA in the assembled 50S subunit and ribosome. In terms of biological role, forms part of the polypeptide exit tunnel. This chain is Large ribosomal subunit protein uL4, found in Rhizorhabdus wittichii (strain DSM 6014 / CCUG 31198 / JCM 15750 / NBRC 105917 / EY 4224 / RW1) (Sphingomonas wittichii).